The primary structure comprises 106 residues: Protein translation factor SUI1 homolog (106 aa).

Belongs to the SUI1 family.

This chain is Protein translation factor SUI1 homolog, found in Methanopyrus kandleri (strain AV19 / DSM 6324 / JCM 9639 / NBRC 100938).